Here is a 328-residue protein sequence, read N- to C-terminus: tRNA uridine(34) hydroxylase (328 aa).

Residues 130–224 (LDKDTVVLDT…YGKDPEVQGE (95 aa)) enclose the Rhodanese domain. Cys-184 functions as the Cysteine persulfide intermediate in the catalytic mechanism.

This sequence belongs to the TrhO family.

It catalyses the reaction uridine(34) in tRNA + AH2 + O2 = 5-hydroxyuridine(34) in tRNA + A + H2O. Its function is as follows. Catalyzes oxygen-dependent 5-hydroxyuridine (ho5U) modification at position 34 in tRNAs. The sequence is that of tRNA uridine(34) hydroxylase from Streptococcus pneumoniae (strain ATCC 700669 / Spain 23F-1).